Here is a 346-residue protein sequence, read N- to C-terminus: Coproporphyrin III ferrochelatase (346 aa).

Fe-coproporphyrin III is bound by residues serine 52 and tyrosine 121. Fe(2+)-binding residues include histidine 181 and glutamate 264.

Belongs to the ferrochelatase family.

The protein localises to the cytoplasm. It carries out the reaction Fe-coproporphyrin III + 2 H(+) = coproporphyrin III + Fe(2+). The protein operates within porphyrin-containing compound metabolism; protoheme biosynthesis. Its function is as follows. Involved in coproporphyrin-dependent heme b biosynthesis. Catalyzes the insertion of ferrous iron into coproporphyrin III to form Fe-coproporphyrin III. This Mycobacterium sp. (strain JLS) protein is Coproporphyrin III ferrochelatase.